The primary structure comprises 409 residues: Glutamyl-tRNA reductase (409 aa).

Substrate is bound by residues 48 to 51 (TCNR), S89, 94 to 96 (ENE), and Q100. C49 serves as the catalytic Nucleophile. 165 to 170 (GNGMLA) lines the NADP(+) pocket.

This sequence belongs to the glutamyl-tRNA reductase family. As to quaternary structure, homodimer.

It carries out the reaction (S)-4-amino-5-oxopentanoate + tRNA(Glu) + NADP(+) = L-glutamyl-tRNA(Glu) + NADPH + H(+). It functions in the pathway porphyrin-containing compound metabolism; protoporphyrin-IX biosynthesis; 5-aminolevulinate from L-glutamyl-tRNA(Glu): step 1/2. Catalyzes the NADPH-dependent reduction of glutamyl-tRNA(Glu) to glutamate 1-semialdehyde (GSA). The polypeptide is Glutamyl-tRNA reductase (Thermoplasma volcanium (strain ATCC 51530 / DSM 4299 / JCM 9571 / NBRC 15438 / GSS1)).